The primary structure comprises 339 residues: Erlin-2 (339 aa).

The Cytoplasmic segment spans residues 1–3 (MAQ). A helical transmembrane segment spans residues 4 to 24 (LGAVVAVASSFFCASLFSAVH). Topologically, residues 25 to 339 (KIEEGHIGVY…EPLETATKEN (315 aa)) are lumenal. N106 carries N-linked (GlcNAc...) asparagine glycosylation. Residues 177–309 (EAIRRNYELM…DIPNMFMDSA (133 aa)) form an interaction with ERLIN1 region. Position 267 is an N6-acetyllysine (K267).

The protein belongs to the band 7/mec-2 family. Forms a heteromeric complex with ERLIN1. In complex with ERLIN1, interacts with RNF170. Interacts with activated ITPR1, independently of the degree of ITPR1 polyubiquitination. Interacts with SCAP, INSIG1, SREBF1 and SREBF2 under cholesterol sufficiency conditions; indicative for an association with the SCAP-SREBP-INSIG complex. Probably part of an AMFR/gp78 and INSIG1-containing ubiquitin ligase complex involved in ERAD of HMGCR. Interacts with TMUB1; TMUB1 bridges the association with AMFR. Interacts with SYVN1 and RNF139. Interacts with TMEM259. Interacts with TMEM41B. In terms of processing, deubiquitinated by USP25; leading to stabilization. In terms of tissue distribution, ubiquitous.

Its subcellular location is the endoplasmic reticulum membrane. Component of the ERLIN1/ERLIN2 complex which mediates the endoplasmic reticulum-associated degradation (ERAD) of inositol 1,4,5-trisphosphate receptors (IP3Rs) such as ITPR1. Promotes sterol-accelerated ERAD of HMGCR probably implicating an AMFR/gp78-containing ubiquitin ligase complex. Involved in regulation of cellular cholesterol homeostasis by regulation the SREBP signaling pathway. May promote ER retention of the SCAP-SREBF complex. The protein is Erlin-2 (ERLIN2) of Homo sapiens (Human).